The sequence spans 226 residues: ATP synthase subunit a (226 aa).

6 helical membrane-spanning segments follow: residues 17 to 37, 79 to 99, 105 to 125, 134 to 154, 176 to 196, and 199 to 219; these read FSYFFHIGLVALIAVIVAMMA, LVATLGIIVFFSNIIGIIPGF, SLNLTLSLAIIVFVYYHFEGI, FAHFMGPIKLLAPLMFPIEIV, LFLMVILALVPYIAPLPAYVL, and FMAFLQAFIFMILTYVYLAGA.

This sequence belongs to the ATPase A chain family. As to quaternary structure, F-type ATPases have 2 components, CF(1) - the catalytic core - and CF(0) - the membrane proton channel. CF(1) has five subunits: alpha(3), beta(3), gamma(1), delta(1), epsilon(1). CF(0) has three main subunits: a(1), b(2) and c(9-12). The alpha and beta chains form an alternating ring which encloses part of the gamma chain. CF(1) is attached to CF(0) by a central stalk formed by the gamma and epsilon chains, while a peripheral stalk is formed by the delta and b chains.

The protein resides in the cell inner membrane. Key component of the proton channel; it plays a direct role in the translocation of protons across the membrane. In Campylobacter jejuni subsp. jejuni serotype O:23/36 (strain 81-176), this protein is ATP synthase subunit a.